Here is a 451-residue protein sequence, read N- to C-terminus: Chaperone SurA (451 aa).

The signal sequence occupies residues 1–26; sequence MKKIIPTNLFKLISILFILTPFFAWS. PpiC domains are found at residues 179–280 and 290–388; these read DVEY…QLQG and KQYH…FLDG.

The protein resides in the periplasm. It catalyses the reaction [protein]-peptidylproline (omega=180) = [protein]-peptidylproline (omega=0). Functionally, chaperone involved in the correct folding and assembly of outer membrane proteins. Recognizes specific patterns of aromatic residues and the orientation of their side chains, which are found more frequently in integral outer membrane proteins. May act in both early periplasmic and late outer membrane-associated steps of protein maturation. The polypeptide is Chaperone SurA (Hydrogenovibrio crunogenus (strain DSM 25203 / XCL-2) (Thiomicrospira crunogena)).